The following is a 115-amino-acid chain: SOSS complex subunit C homolog (115 aa).

This sequence belongs to the SOSS-C family.

This chain is SOSS complex subunit C homolog, found in Drosophila mojavensis (Fruit fly).